The primary structure comprises 324 residues: Phospho-N-acetylmuramoyl-pentapeptide-transferase (324 aa).

The next 10 helical transmembrane spans lie at 5–25 (GLLVTAGVAFLISVALSPLFI), 52–72 (PTMGGIVIYVSMMVTSLIMAI), 77–97 (LGAEVSLLLLVTFGYGLIGFL), 122–142 (VIAIAFFLIGKGQAFHTYIMI), 149–169 (FELGWAYFVLVLFMLIGGSNA), 176–196 (LDGLLSGTAAIAFGAFSIIAV), 201–221 (FGVAIFCMAVVGAVLGFLVFN), 227–247 (VFMGDTGSLALGGAIAAVAIL), 253–273 (LLVIIGGVFVMETLSVIIQVI), and 302–322 (VVVTFWSVGFLLAVLGIYIGV).

This sequence belongs to the glycosyltransferase 4 family. MraY subfamily. The cofactor is Mg(2+).

The protein resides in the cell membrane. The catalysed reaction is UDP-N-acetyl-alpha-D-muramoyl-L-alanyl-gamma-D-glutamyl-meso-2,6-diaminopimeloyl-D-alanyl-D-alanine + di-trans,octa-cis-undecaprenyl phosphate = di-trans,octa-cis-undecaprenyl diphospho-N-acetyl-alpha-D-muramoyl-L-alanyl-D-glutamyl-meso-2,6-diaminopimeloyl-D-alanyl-D-alanine + UMP. Its pathway is cell wall biogenesis; peptidoglycan biosynthesis. In terms of biological role, catalyzes the initial step of the lipid cycle reactions in the biosynthesis of the cell wall peptidoglycan: transfers peptidoglycan precursor phospho-MurNAc-pentapeptide from UDP-MurNAc-pentapeptide onto the lipid carrier undecaprenyl phosphate, yielding undecaprenyl-pyrophosphoryl-MurNAc-pentapeptide, known as lipid I. This is Phospho-N-acetylmuramoyl-pentapeptide-transferase from Bacillus cereus (strain AH820).